The primary structure comprises 206 residues: Small ribosomal subunit protein uS4B (206 aa).

Positions 96-156 constitute an S4 RNA-binding domain; it reads GRLDNVVYRM…EKAKKQSRIG (61 aa).

The protein belongs to the universal ribosomal protein uS4 family. In terms of assembly, part of the 30S ribosomal subunit. Contacts protein S5. The interaction surface between S4 and S5 is involved in control of translational fidelity.

Its function is as follows. One of the primary rRNA binding proteins, it binds directly to 16S rRNA where it nucleates assembly of the body of the 30S subunit. With S5 and S12 plays an important role in translational accuracy. This chain is Small ribosomal subunit protein uS4B, found in Psychromonas ingrahamii (strain DSM 17664 / CCUG 51855 / 37).